The following is a 184-amino-acid chain: Probable chemoreceptor glutamine deamidase CheD (184 aa).

The protein belongs to the CheD family.

The catalysed reaction is L-glutaminyl-[protein] + H2O = L-glutamyl-[protein] + NH4(+). In terms of biological role, probably deamidates glutamine residues to glutamate on methyl-accepting chemotaxis receptors (MCPs), playing an important role in chemotaxis. This Rhizobium etli (strain CIAT 652) protein is Probable chemoreceptor glutamine deamidase CheD.